The chain runs to 465 residues: Lysosomal dipeptide transporter MFSD1 (465 aa).

The segment at 1 to 23 (MEEEDEEARALLAGGPDEADRGA) is disordered. Residues 11 to 12 (LL) carry the Dileucine internalization motif motif. 12 helical membrane passes run 39–59 (LAHRLLVLLLMCFLGFGSYFC), 83–103 (LLYAWYSWPNVVLCFFGGFLI), 113–133 (TIIFSCFVCIGQVVFALGGIF), 135–155 (AFWLMEFGRFVFGIGGESLAV), 170–191 (LNLVFGLQLSMARIGSTVNMNL), 213–233 (ITLMIGGITCILSLICALALA), 266–286 (LWLIFIICVCYYVAVFPFIGL), 303–323 (SAINSVVYVISAPMSPVFGLL), 331–351 (IIWVLCAVAATLVSHMMLAFT), 361–381 (LLGLSYSLLACALWPMVAFVV), 392–412 (FMQSIQNLGLAIISIIAGMIL), and 418–438 (LFLEVFFIACVSLSLLSVVLL).

The protein belongs to the major facilitator superfamily. As to quaternary structure, homodimer. Interacts with lysosomal protein GLMP (via lumenal domain); the interaction starts while both proteins are still in the endoplasmic reticulum and is required for stabilization of MFSD1 in lysosomes but has no direct effect on its targeting to lysosomes or transporter activity.

It localises to the lysosome membrane. The enzyme catalyses L-alpha-aminoacyl-L-arginine(out) = L-alpha-aminoacyl-L-arginine(in). It catalyses the reaction L-arginyl-L-alpha-amino acid(out) = L-arginyl-L-alpha-amino acid(in). The catalysed reaction is L-arginyl-glycine(out) = L-arginyl-glycine(in). It carries out the reaction L-alpha-aminoacyl-L-lysine(out) = L-alpha-aminoacyl-L-lysine(in). The enzyme catalyses L-aspartyl-L-lysine(out) = L-aspartyl-L-lysine(in). It catalyses the reaction L-alanyl-L-lysine(out) = L-alanyl-L-lysine(in). The catalysed reaction is L-lysyl-L-alpha-amino acid(out) = L-lysyl-L-alpha-amino acid(in). It carries out the reaction L-lysyl-L-alanine(out) = L-lysyl-L-alanine(in). The enzyme catalyses L-lysyl-L-lysine(out) = L-lysyl-L-lysine(in). It catalyses the reaction L-lysyl-glycine(out) = L-lysyl-glycine(in). The catalysed reaction is L-alpha-aminoacyl-L-histidine(out) = L-alpha-aminoacyl-L-histidine(in). It carries out the reaction L-histidyl-L-alpha-amino acid(out) = L-histidyl-L-alpha-amino acid(in). The enzyme catalyses L-histidyl-glycine(out) = L-histidyl-glycine(in). Functionally, lysosomal dipeptide uniporter that selectively exports lysine, arginine or histidine-containing dipeptides with a net positive charge from the lysosome lumen into the cytosol. Could play a role in a specific type of protein O-glycosylation indirectly regulating macrophages migration and tissue invasion. Also essential for liver homeostasis. This Homo sapiens (Human) protein is Lysosomal dipeptide transporter MFSD1.